Here is a 206-residue protein sequence, read N- to C-terminus: MAPNHLSVREMREDEKPLVLEMLKAGVKDTENRVALHALTRPPALLLLAAASSGLRFILASFALALLLPVFLAVAAVKLGLRARWGSLPPPGGLGGPWVAVRGSGDVCGVLALAPGANVGDGARVTRLSVSRWHRRRGVGRRLLAFAEARARAWAGSMGEPRARLVVPVAVAAWGVAGLLEACGYQAEGGWGCMGYMLVREFSKDL.

In terms of domain architecture, N-acetyltransferase spans Leu-6 to Leu-206. The chain crosses the membrane as a helical span at residues Phe-57 to Val-77.

This sequence belongs to the camello family.

The protein localises to the membrane. Functionally, probable acetyltransferase that binds the 5'-GGACTACAG-3' sequence of coproporphyrinogen oxidase promoter. Able to activate transcription of a reporter construct in vitro. In terms of biological role, probable acetyltransferase. Its function is as follows. May act as a transcription factor regulating the expression of coproporphyrinogen oxidase by binding to a promoter regulatory element. The sequence is that of Probable N-acetyltransferase 14 (Nat14) from Mus musculus (Mouse).